We begin with the raw amino-acid sequence, 306 residues long: tRNA dimethylallyltransferase (306 aa).

Residue 12–19 (GPTGTKKS) participates in ATP binding.

Belongs to the IPP transferase family. In terms of assembly, monomer. It depends on Mg(2+) as a cofactor.

The catalysed reaction is adenosine(37) in tRNA + dimethylallyl diphosphate = N(6)-dimethylallyladenosine(37) in tRNA + diphosphate. Catalyzes the transfer of a dimethylallyl group onto the adenine at position 37 in tRNAs that read codons beginning with uridine, leading to the formation of N6-(dimethylallyl)adenosine (i(6)A). This is tRNA dimethylallyltransferase from Mycoplasmoides gallisepticum (strain R(low / passage 15 / clone 2)) (Mycoplasma gallisepticum).